A 511-amino-acid chain; its full sequence is MDEYEAQLLVVEQALENATDEHQRQELLALKENLQELLSLTRGGTEDDAATDDDSQNADNLDNELERLKSELNDMEATGASKSNENEVQQLADLRTKYSSMVGEKCSAPHEHSWGAISYHNALICGVDDEVIINGDGALDARLRVLFTNPTHREMLPCSYYLEGECRFDEARCRYSHGALVTGSSIRKYNPPDFHKLSRSCPVLAQLPDRLWHRGRVLCVNFVEQVCRVRLDGQDHKERERDFKFEELFPLTTDQEDELTSEDSSSVNDGSSDEEESDMDDLEAARRARMVELSLFTFKPTEKLGAWEEYTRGIGSKLMEKMGYIHGTGLGSDGRGIVTPVSAQILPKGRSLDACMELREAANGDKDYFSVERKLQRAQRRQKKANEKAYVRESQRTDVFSFLNSSVLGSDNKQQAEPEAKKAKANDLQQHSTKTLNVETVRIADDIRRKQRDIAKVQQSLDRNTGDVQLQKRLQAQMHNQKQELATLQAQERSLSKEQQTRKSKNKMFEF.

Residues 157-180 form a C3H1-type zinc finger; the sequence is PCSYYLEGECRFDEARCRYSHGAL. The disordered stretch occupies residues 254–281; it reads DQEDELTSEDSSSVNDGSSDEEESDMDD. Over residues 271 to 281 the composition is skewed to acidic residues; it reads SSDEEESDMDD. The G-patch domain maps to 311–357; the sequence is TRGIGSKLMEKMGYIHGTGLGSDGRGIVTPVSAQILPKGRSLDACME. Disordered regions lie at residues 409–433 and 478–511; these read GSDN…QHST and MHNQ…MFEF. Over residues 414-425 the composition is skewed to basic and acidic residues; that stretch reads QQAEPEAKKAKA. Over residues 478–493 the composition is skewed to polar residues; the sequence is MHNQKQELATLQAQER. Positions 494 to 511 are enriched in basic and acidic residues; sequence SLSKEQQTRKSKNKMFEF.

It is found in the nucleus. Its function is as follows. Transcription repressor. The polypeptide is Zinc finger CCCH-type with G patch domain-containing protein (Drosophila ananassae (Fruit fly)).